Here is a 67-residue protein sequence, read N- to C-terminus: Bombesin (67 aa).

The N-terminal stretch at 1-30 is a signal peptide; that stretch reads MLLLSAVKTLLLAWLGIVLVFMSIIKSAML. Residues 31–49 constitute a propeptide that is removed on maturation; it reads DFLQEAGKLEGIETYKKEA. Pyrrolidone carboxylic acid is present on glutamine 50. Position 64 is a methionine amide (methionine 64).

As to expression, expressed by the skin glands.

The protein resides in the secreted. Its function is as follows. Stimulates smooth muscle contraction in isolated rat stomach strip. The chain is Bombesin from Rana shuchinae (Sichuan frog).